The chain runs to 353 residues: Sesquiterpene synthase Agr8 (353 aa).

Residues Asp-82, Asn-220, Ser-224, and Glu-228 each coordinate Mg(2+). The DDXXD motif motif lies at 82 to 86 (DEYTD). 2 residues coordinate (2E,6E)-farnesyl diphosphate: Arg-309 and Tyr-310.

This sequence belongs to the terpene synthase family. It depends on Mg(2+) as a cofactor.

It carries out the reaction (2E,6E)-farnesyl diphosphate = gamma-muurolene + diphosphate. The catalysed reaction is (2E,6E)-farnesyl diphosphate = alpha-selinene + diphosphate. The enzyme catalyses (2E,6E)-farnesyl diphosphate = delta-cadinene + diphosphate. In terms of biological role, terpene cyclase that catalyzes the cyclization of farnesyl diphosphate (FPP) to various sesquiterpenes, including beta-elemene, gamma-muurolene, alpha-selinene, beta-selinene, beta-cadinene, delta-cadinene and alpha-cadinol. This is Sesquiterpene synthase Agr8 from Cyclocybe aegerita (Black poplar mushroom).